A 72-amino-acid chain; its full sequence is Arrestin-E (72 aa).

This sequence belongs to the arrestin family. Adrenal, cerebral cortex, heart, hypothalamus, intestine, liver, lung, pituitary, retina and testis.

This Rattus norvegicus (Rat) protein is Arrestin-E (Ear).